Consider the following 323-residue polypeptide: Cell division protein ZipA (323 aa).

Residues 1-5 (MQELR) are Periplasmic-facing. The chain crosses the membrane as a helical span at residues 6 to 26 (FVLIVVGALAIAALLFHGLWT). Over 27 to 323 (SKKEGKAKFG…QIVEFNAANA (297 aa)) the chain is Cytoplasmic. The segment at 35-92 (FGNKPLGKLDVDQEDKDTPGQERDFAPDPEDDFEIIRKDRKEPDFGMENSFDNKFSSD) is disordered. 2 stretches are compositionally biased toward basic and acidic residues: residues 41–60 (GKLD…RDFA) and 68–78 (EIIRKDRKEPD).

This sequence belongs to the ZipA family. As to quaternary structure, interacts with FtsZ via their C-terminal domains.

Its subcellular location is the cell inner membrane. In terms of biological role, essential cell division protein that stabilizes the FtsZ protofilaments by cross-linking them and that serves as a cytoplasmic membrane anchor for the Z ring. Also required for the recruitment to the septal ring of downstream cell division proteins. This chain is Cell division protein ZipA, found in Vibrio campbellii (strain ATCC BAA-1116).